The following is an 89-amino-acid chain: Small ribosomal subunit protein uS15 (89 aa).

The protein belongs to the universal ribosomal protein uS15 family. Part of the 30S ribosomal subunit. Forms a bridge to the 50S subunit in the 70S ribosome, contacting the 23S rRNA.

One of the primary rRNA binding proteins, it binds directly to 16S rRNA where it helps nucleate assembly of the platform of the 30S subunit by binding and bridging several RNA helices of the 16S rRNA. Functionally, forms an intersubunit bridge (bridge B4) with the 23S rRNA of the 50S subunit in the ribosome. This Bordetella avium (strain 197N) protein is Small ribosomal subunit protein uS15.